The following is a 251-amino-acid chain: MTLDLDASKKDDKLLLTTVQQEYKILAEYKMIESEKIGGVYVIPSYANSLQWFGVFFGRKDFYSEGVFRFTLLLPDRFPDDKTLPSIIFQQKIFHPLICPYTHSLDISHAFPEWRCGDDHLWQLLKYMQAVFSDPLESIRHVEMDKLKNSEAADLLINNREEFANRTRENIRESLAHIYDTPITEDPHYITFEKFQSEVHGPVLEGIKAGQSKHLESQSQQSNNGGNGGGGGAATGLSWVKEGEFKPLSVE.

The region spanning 20-176 is the UBC core domain; it reads QQEYKILAEY…TRENIRESLA (157 aa). The segment at 211-251 is disordered; that stretch reads QSKHLESQSQQSNNGGNGGGGGAATGLSWVKEGEFKPLSVE. A compositionally biased stretch (gly residues) spans 225-234; it reads GGNGGGGGAA.

The protein belongs to the ubiquitin-conjugating enzyme family. FTS subfamily.

In Drosophila willistoni (Fruit fly), this protein is Protein crossbronx (cbx).